The sequence spans 1250 residues: DNA-directed RNA polymerase subunit beta'' (1250 aa).

Zn(2+) is bound by residues cysteine 224, cysteine 314, cysteine 321, and cysteine 324.

It belongs to the RNA polymerase beta' chain family. RpoC2 subfamily. In terms of assembly, in plastids the minimal PEP RNA polymerase catalytic core is composed of four subunits: alpha, beta, beta', and beta''. When a (nuclear-encoded) sigma factor is associated with the core the holoenzyme is formed, which can initiate transcription. It depends on Zn(2+) as a cofactor.

It is found in the plastid. It localises to the chloroplast. The catalysed reaction is RNA(n) + a ribonucleoside 5'-triphosphate = RNA(n+1) + diphosphate. Functionally, DNA-dependent RNA polymerase catalyzes the transcription of DNA into RNA using the four ribonucleoside triphosphates as substrates. The chain is DNA-directed RNA polymerase subunit beta'' from Staurastrum punctulatum (Green alga).